A 273-amino-acid chain; its full sequence is Light-independent protochlorophyllide reductase iron-sulfur ATP-binding protein (273 aa).

ATP is bound by residues 12–17 and Lys-41; that span reads GIGKST. Position 16 (Ser-16) interacts with Mg(2+). 2 residues coordinate [4Fe-4S] cluster: Cys-97 and Cys-131. Residue 182 to 183 coordinates ATP; that stretch reads NR.

This sequence belongs to the NifH/BchL/ChlL family. As to quaternary structure, homodimer. Protochlorophyllide reductase is composed of three subunits; BchL, BchN and BchB. [4Fe-4S] cluster is required as a cofactor.

The catalysed reaction is chlorophyllide a + oxidized 2[4Fe-4S]-[ferredoxin] + 2 ADP + 2 phosphate = protochlorophyllide a + reduced 2[4Fe-4S]-[ferredoxin] + 2 ATP + 2 H2O. The protein operates within porphyrin-containing compound metabolism; bacteriochlorophyll biosynthesis (light-independent). Functionally, component of the dark-operative protochlorophyllide reductase (DPOR) that uses Mg-ATP and reduced ferredoxin to reduce ring D of protochlorophyllide (Pchlide) to form chlorophyllide a (Chlide). This reaction is light-independent. The L component serves as a unique electron donor to the NB-component of the complex, and binds Mg-ATP. The sequence is that of Light-independent protochlorophyllide reductase iron-sulfur ATP-binding protein from Chloroflexus aggregans (strain MD-66 / DSM 9485).